The primary structure comprises 372 residues: Neuropeptide S receptor (372 aa).

Residues 1–52 are Extracellular-facing; that stretch reads MPANLTEGSFHANQTVPMLDSSPVACTEIVTFTEALEAEEWGSFYSSFKTEQ. 2 N-linked (GlcNAc...) asparagine glycosylation sites follow: N4 and N13. A helical membrane pass occupies residues 53–73; sequence LITLWVLFVFTIVGNSVVLFS. At 74 to 82 the chain is on the cytoplasmic side; sequence TWRRKRKSR. A helical transmembrane segment spans residues 83 to 103; that stretch reads MTFFVTQLAITDSFTGLINIL. The Extracellular portion of the chain corresponds to 104–122; the sequence is TDIIWRFTGDFMAPDLVCR. A disulfide bridge connects residues C121 and C198. A helical membrane pass occupies residues 123–143; sequence IVRYLQVVLLYASTYVLVSLS. At 144-165 the chain is on the cytoplasmic side; it reads IDRYHAIVYPMKFLQGAEKQAK. Residues 166 to 186 traverse the membrane as a helical segment; it reads VLIGIAWSLSFLFSIPTLIIF. Residues 187-213 are Extracellular-facing; sequence GKRTLSNGEVQCWALWPDDSYWTPYMT. Residues 214–234 form a helical membrane-spanning segment; that stretch reads IVAFLVYFIPLTIISVIYGLV. Topologically, residues 235-276 are cytoplasmic; sequence IRTIWIKSKAHETVISNCSDGELCCSYNRGLISKAKIKAIKY. A helical membrane pass occupies residues 277–297; it reads SIVIILAFICCWSPYFLFDML. Topologically, residues 298 to 313 are extracellular; that stretch reads DNFNLLPDTKERFYAS. A helical transmembrane segment spans residues 314 to 334; the sequence is VIIQNLPALNSAINPLIYCIF. Over 335-372 the chain is Cytoplasmic; the sequence is SGSLCSPCKVQRSQDSRMTYRERSERHEMQILSKPEFI.

The protein belongs to the G-protein coupled receptor 1 family. Vasopressin/oxytocin receptor subfamily.

It localises to the cell membrane. G-protein coupled receptor for neuropeptide S (NPS). Promotes mobilization of intracellular Ca(2+) stores. Inhibits cell growth in response to NPS binding. Involved in pathogenesis of asthma and other IgE-mediated diseases. The protein is Neuropeptide S receptor (Npsr1) of Rattus norvegicus (Rat).